We begin with the raw amino-acid sequence, 1374 residues long: Mitogen-activated protein kinase kinase kinase 5 (1374 aa).

The interval 68–87 (PAATSSSSATRGRGSSVGGG) is disordered. A compositionally biased stretch (low complexity) spans 69–81 (AATSSSSATRGRG). Residues arginine 78 and arginine 80 each carry the asymmetric dimethylarginine; by PRMT1 modification. Serine 83 is modified (phosphoserine; by PIM1 and PKB/AKT1). The interval 649–1374 (MVNTITEEKG…AIIDFRNKQT (726 aa)) is interaction with PPIA/CYPA. A Protein kinase domain is found at 680–938 (NGDRVVLGKG…ANDLLVDEFL (259 aa)). ATP is bound by residues 686–694 (LGKGTYGIV) and lysine 709. Tyrosine 718 carries the post-translational modification Phosphotyrosine. Aspartate 803 serves as the catalytic Proton acceptor. Residue threonine 813 is modified to Phosphothreonine; by autocatalysis. Threonine 838 is subject to Phosphothreonine; by autocatalysis, MELK and MAP3K6. Position 842 is a phosphothreonine; by autocatalysis (threonine 842). Phosphoserine is present on serine 958. Serine 966 bears the Phosphoserine; by autocatalysis mark. Serine 1029 and serine 1033 each carry phosphoserine. The tract at residues 1182-1209 (SESDTADQEDLDVEDDHEEQPSNQTVRR) is disordered. Residues 1185-1199 (DTADQEDLDVEDDHE) show a composition bias toward acidic residues. A coiled-coil region spans residues 1245–1285 (LGRMKIETNRLLEELVRKEKELQALLHRAIEEKDQEIKHLK).

Belongs to the protein kinase superfamily. STE Ser/Thr protein kinase family. MAP kinase kinase kinase subfamily. In terms of assembly, homodimer when inactive. Binds both upstream activators and downstream substrates in multimolecular complexes. Part of a cytoplasmic complex made of HIPK1, DAB2IP and MAP3K5 in response to TNF. This complex formation promotes MAP3K5-JNK activation and subsequent apoptosis. Interacts with SOCS1 which recognizes phosphorylation of Tyr-718 and induces MAP3K5/ASK1 degradation in endothelial cells. Interacts with the 14-3-3 family proteins such as YWHAB, YWHAE, YWHAQ, YWHAH, YWHAZ and SFN. Interacts with ARRB2, BIRC2, DAB2IP, IGF1R, MAP3K6/ASK2, PGAM5, PIM1, PPP5C, SOCS1, STUB1, TRAF2, TRAF6 and TXN. Interacts with ERN1 in a TRAF2-dependent manner. Interacts with calcineurin subunit PPP3R1. Interacts with PPM1L. Interacts (via N-terminus) with RAF1 and this interaction inhibits the proapoptotic function of MAP3K5. Interacts with DAB2IP (via N-terminus C2 domain); the interaction occurs in a TNF-alpha-dependent manner. Interacts with DUSP13A; may positively regulate apoptosis. Interacts with DAXX. Interacts with RC3H2. Interacts with PPIA/CYPA. Interacts with PRMT1; the interaction results in MAP3K5 methylation by PRMT1 which inhibits MAP3K5 activation. Interacts with TRAF2; the interaction is inhibited by PRMT1. Interacts with TRIM48. As to quaternary structure, (Microbial infection) Interacts with HIV-1 Nef; this interaction inhibits MAP3K5 signaling. Requires Mg(2+) as cofactor. In terms of processing, phosphorylated at Thr-838 through autophosphorylation and by MAP3K6/ASK2 which leads to activation. Thr-838 is dephosphorylated by PPP5C. Ser-83 and Ser-1033 are inactivating phosphorylation sites, the former of which is phosphorylated by AKT1. Phosphorylated at Ser-966 which induces association of MAP3K5/ASK1 with the 14-3-3 family proteins and suppresses MAP3K5/ASK1 activity. Calcineurin (CN) dephosphorylates this site. Also dephosphorylated and activated by PGAM5. Phosphorylation at Ser-966 in response to oxidative stress is negatively regulated by PPIA/CYPA. Ubiquitinated. Tumor necrosis factor (TNF) induces TNFR2-dependent ubiquitination, leading to proteasomal degradation. Ubiquitinated by RC3H2 in a TRIM48-dependent manner. Post-translationally, methylation at Arg-78 and Arg-80 by PRMT1 promotes association of MAP3K5 with thioredoxin and negatively regulates MAP3K5 association with TRAF2, inhibiting MAP3K5 activation. Methylation is blocked by ubiquitination of PRMT1 by TRIM48. In terms of tissue distribution, abundantly expressed in heart and pancreas.

The protein resides in the cytoplasm. It is found in the endoplasmic reticulum. It carries out the reaction L-seryl-[protein] + ATP = O-phospho-L-seryl-[protein] + ADP + H(+). The catalysed reaction is L-threonyl-[protein] + ATP = O-phospho-L-threonyl-[protein] + ADP + H(+). Its activity is regulated as follows. Activated by various stressors, including oxidative stress, endoplasmic reticulum stress, and calcium overload, as well as by receptor-mediated inflammatory signals, such as the tumor necrosis factor (TNF) and lipopolysaccharide (LPS). Homophilic association of MAP3K5/ASK1 through the C-terminal coiled-coil domains and the heteromeric complex formation of MAP3K5/ASK1 with the reduced form of thioredoxin (TXN), constitutes an inactive form of the kinase. Upon ROS-induced dissociation of TXN from MAP3K5/ASK1, TRAF2 and TRAF6 are reciprocally recruited to MAP3K5/ASK1 and form the active MAP3K5/ASK1 signalosome, in which TRAF2 and TRAF6 appear to facilitate the active configuration of MAP3K5/ASK1. MAP3K5/ASK1 activity is also regulated through several phosphorylation and dephosphorylation events. Thr-838 is an activating phosphorylation site that is autophosphorylated and phosphorylated by MAP3K6/ASK2 and dephosphorylated by PPP5C. Ser-83 and Ser-1033 are inactivating phosphorylation sites, the former of which is phosphorylated by AKT1. Phosphorylation of Ser-966 induces association of MAP3K5/ASK1 with the 14-3-3 family proteins, which suppresses MAP3K5/ASK1 activity. Calcium/calmodulin-activated protein phosphatase calcineurin (PPP3CA) has been shown to directly dephosphorylate this site. SOCS1 binds to ASK1 by recognizing phosphorylation of Tyr-718 and induces MAP3K5/ASK1 degradation in endothelial cells. Also dephosphorylated and activated by PGAM5. Contains an N-terminal autoinhibitory domain. Once activated targeted for proteasomal degradation by RC3H2-mediated ubiquitination. In terms of biological role, serine/threonine kinase which acts as an essential component of the MAP kinase signal transduction pathway. Plays an important role in the cascades of cellular responses evoked by changes in the environment. Mediates signaling for determination of cell fate such as differentiation and survival. Plays a crucial role in the apoptosis signal transduction pathway through mitochondria-dependent caspase activation. MAP3K5/ASK1 is required for the innate immune response, which is essential for host defense against a wide range of pathogens. Mediates signal transduction of various stressors like oxidative stress as well as by receptor-mediated inflammatory signals, such as the tumor necrosis factor (TNF) or lipopolysaccharide (LPS). Once activated, acts as an upstream activator of the MKK/JNK signal transduction cascade and the p38 MAPK signal transduction cascade through the phosphorylation and activation of several MAP kinase kinases like MAP2K4/SEK1, MAP2K3/MKK3, MAP2K6/MKK6 and MAP2K7/MKK7. These MAP2Ks in turn activate p38 MAPKs and c-jun N-terminal kinases (JNKs). Both p38 MAPK and JNKs control the transcription factors activator protein-1 (AP-1). This Homo sapiens (Human) protein is Mitogen-activated protein kinase kinase kinase 5 (MAP3K5).